Reading from the N-terminus, the 661-residue chain is Kininogen-1 (661 aa).

The first 20 residues, 1-20, serve as a signal peptide directing secretion; the sequence is MKLITTLLLCSGLLLTLTQG. Residues 28-131 form the Cystatin kininogen-type 1 domain; that stretch reads CNDEAVFQAV…TQTCKIAPSK (104 aa). Disulfide bonds link cysteine 28–cysteine 631, cysteine 83–cysteine 94, cysteine 107–cysteine 125, cysteine 141–cysteine 144, cysteine 205–cysteine 217, cysteine 228–cysteine 247, cysteine 263–cysteine 266, cysteine 327–cysteine 339, and cysteine 350–cysteine 369. Asparagine 82 carries an N-linked (GlcNAc...) asparagine glycan. The Cystatin kininogen-type 2 domain maps to 150 to 253; it reads TDSPDLEPVL…SQSCTLYSGD (104 aa). N-linked (GlcNAc...) asparagine glycosylation is found at asparagine 168 and asparagine 204. The N-linked (GlcNAc...) asparagine glycan is linked to asparagine 242. In terms of domain architecture, Cystatin kininogen-type 3 spans 272-375; sequence VDSPELKEVL…TVKCQALDMT (104 aa). Serine 331 carries the phosphoserine modification. Disordered stretches follow at residues 405 to 471, 485 to 583, and 626 to 661; these read YIAR…LGHG, DGDD…FQDS, and ATSP…DALS. 2 stretches are compositionally biased toward basic residues: residues 434-471 and 492-526; these read KANK…LGHG and TVGH…HGKH. Residues 541–555 are compositionally biased toward low complexity; it reads TESLASSSEYSTTST. Acidic residues predominate over residues 650–661; that stretch reads EFSDFDLLDALS.

Isoform LMW interacts with CRISP3. Bradykinin is released from kininogen by plasma kallikrein. Post-translationally, phosphorylated by FAM20C in the extracellular medium. In terms of processing, bradykinin is inactivated by ACE, which removes the dipeptide Arg-Phe from its C-terminus. Plasma.

The protein localises to the secreted. It is found in the extracellular space. Functionally, kininogens are inhibitors of thiol proteases. HMW-kininogen plays an important role in blood coagulation by helping to position optimally prekallikrein and factor XI next to factor XII; HMW-kininogen inhibits the thrombin- and plasmin-induced aggregation of thrombocytes. LMW-kininogen inhibits the aggregation of thrombocytes. LMW-kininogen is in contrast to HMW-kininogen not involved in blood clotting. In terms of biological role, the active peptide bradykinin is a potent vasodilatator that is released from HMW-kininogen shows a variety of physiological effects: (A) influence in smooth muscle contraction, (B) induction of hypotension, (C) natriuresis and diuresis, (D) decrease in blood glucose level, (E) it is a mediator of inflammation and causes (E1) increase in vascular permeability, (E2) stimulation of nociceptors (4E3) release of other mediators of inflammation (e.g. prostaglandins), (F) it has a cardioprotective effect (directly via bradykinin action, indirectly via endothelium-derived relaxing factor action). The polypeptide is Kininogen-1 (Kng1) (Mus musculus (Mouse)).